The primary structure comprises 204 residues: Holliday junction branch migration complex subunit RuvA (204 aa).

Residues 1-64 (MIGHLTGRLV…EDAHLLFGFS (64 aa)) form a domain I region. The domain II stretch occupies residues 65 to 143 (QKTDRTLFRE…GIQQEDFFIE (79 aa)). Residues 144–155 (SQHLKQPEHALN) form a flexible linker region. A domain III region spans residues 156–204 (EQDIPASEAISALIALGYKAAEAEKLVKKISKPALSSEQLIREALKAAL).

The protein belongs to the RuvA family. Homotetramer. Forms an RuvA(8)-RuvB(12)-Holliday junction (HJ) complex. HJ DNA is sandwiched between 2 RuvA tetramers; dsDNA enters through RuvA and exits via RuvB. An RuvB hexamer assembles on each DNA strand where it exits the tetramer. Each RuvB hexamer is contacted by two RuvA subunits (via domain III) on 2 adjacent RuvB subunits; this complex drives branch migration. In the full resolvosome a probable DNA-RuvA(4)-RuvB(12)-RuvC(2) complex forms which resolves the HJ.

The protein resides in the cytoplasm. Functionally, the RuvA-RuvB-RuvC complex processes Holliday junction (HJ) DNA during genetic recombination and DNA repair, while the RuvA-RuvB complex plays an important role in the rescue of blocked DNA replication forks via replication fork reversal (RFR). RuvA specifically binds to HJ cruciform DNA, conferring on it an open structure. The RuvB hexamer acts as an ATP-dependent pump, pulling dsDNA into and through the RuvAB complex. HJ branch migration allows RuvC to scan DNA until it finds its consensus sequence, where it cleaves and resolves the cruciform DNA. The protein is Holliday junction branch migration complex subunit RuvA of Pasteurella multocida (strain Pm70).